Here is a 475-residue protein sequence, read N- to C-terminus: uncharacterized protein (475 aa).

Residues 19-39 traverse the membrane as a helical segment; it reads LVSAILILSILIWLIITIFFA.

It localises to the membrane. This is an uncharacterized protein from Mycoplasma pneumoniae (strain ATCC 29342 / M129 / Subtype 1) (Mycoplasmoides pneumoniae).